A 251-amino-acid chain; its full sequence is Aspartate/glutamate leucyltransferase (251 aa).

The protein belongs to the R-transferase family. Bpt subfamily.

The protein resides in the cytoplasm. The catalysed reaction is N-terminal L-glutamyl-[protein] + L-leucyl-tRNA(Leu) = N-terminal L-leucyl-L-glutamyl-[protein] + tRNA(Leu) + H(+). The enzyme catalyses N-terminal L-aspartyl-[protein] + L-leucyl-tRNA(Leu) = N-terminal L-leucyl-L-aspartyl-[protein] + tRNA(Leu) + H(+). In terms of biological role, functions in the N-end rule pathway of protein degradation where it conjugates Leu from its aminoacyl-tRNA to the N-termini of proteins containing an N-terminal aspartate or glutamate. The sequence is that of Aspartate/glutamate leucyltransferase from Xanthomonas oryzae pv. oryzae (strain MAFF 311018).